Consider the following 277-residue polypeptide: Diaminopimelate epimerase (277 aa).

Positions 13, 46, and 66 each coordinate substrate. The active-site Proton donor is C75. Residues 76–77 (GN), N160, N193, and 211–212 (ER) each bind substrate. The active-site Proton acceptor is the C220. 221–222 (GT) lines the substrate pocket.

Belongs to the diaminopimelate epimerase family. In terms of assembly, homodimer.

The protein resides in the cytoplasm. The enzyme catalyses (2S,6S)-2,6-diaminopimelate = meso-2,6-diaminopimelate. The protein operates within amino-acid biosynthesis; L-lysine biosynthesis via DAP pathway; DL-2,6-diaminopimelate from LL-2,6-diaminopimelate: step 1/1. Its function is as follows. Catalyzes the stereoinversion of LL-2,6-diaminopimelate (L,L-DAP) to meso-diaminopimelate (meso-DAP), a precursor of L-lysine and an essential component of the bacterial peptidoglycan. The polypeptide is Diaminopimelate epimerase (Saccharophagus degradans (strain 2-40 / ATCC 43961 / DSM 17024)).